A 388-amino-acid polypeptide reads, in one-letter code: UTP--glucose-1-phosphate uridylyltransferase (388 aa).

Asp118 contributes to the Mg(2+) binding site.

It belongs to the CugP-type UDP-glucose pyrophosphorylase family. Mg(2+) serves as cofactor.

The catalysed reaction is alpha-D-glucose 1-phosphate + UTP + H(+) = UDP-alpha-D-glucose + diphosphate. Catalyzes the formation of UDP-glucose, from UTP and glucose 1-phosphate. Is highly specific since it cannot use other NTPs such as dTTP, CTP, ATP, and GTP, and other sugar-1P such as GlcNAc-1P, Gal-1P, and Man-1P, as substrates. Has probably a central and essential role as the substrate supplier for galactolipid synthesis; galactolipids are major constituents of the photosynthetic thylakoid membrane and important for photosynthetic activity. This chain is UTP--glucose-1-phosphate uridylyltransferase, found in Synechocystis sp. (strain ATCC 27184 / PCC 6803 / Kazusa).